Here is a 515-residue protein sequence, read N- to C-terminus: Bifunctional purine biosynthesis protein PurH (515 aa).

In terms of domain architecture, MGS-like spans 1–145; sequence MTKRVLISVS…KNHASVTVVV (145 aa).

Belongs to the PurH family.

The enzyme catalyses (6R)-10-formyltetrahydrofolate + 5-amino-1-(5-phospho-beta-D-ribosyl)imidazole-4-carboxamide = 5-formamido-1-(5-phospho-D-ribosyl)imidazole-4-carboxamide + (6S)-5,6,7,8-tetrahydrofolate. The catalysed reaction is IMP + H2O = 5-formamido-1-(5-phospho-D-ribosyl)imidazole-4-carboxamide. It functions in the pathway purine metabolism; IMP biosynthesis via de novo pathway; 5-formamido-1-(5-phospho-D-ribosyl)imidazole-4-carboxamide from 5-amino-1-(5-phospho-D-ribosyl)imidazole-4-carboxamide (10-formyl THF route): step 1/1. Its pathway is purine metabolism; IMP biosynthesis via de novo pathway; IMP from 5-formamido-1-(5-phospho-D-ribosyl)imidazole-4-carboxamide: step 1/1. The sequence is that of Bifunctional purine biosynthesis protein PurH from Streptococcus pneumoniae serotype 2 (strain D39 / NCTC 7466).